The sequence spans 394 residues: S-adenosylmethionine synthase (394 aa).

His18 lines the ATP pocket. Asp20 is a Mg(2+) binding site. Residue Glu46 participates in K(+) binding. The L-methionine site is built by Glu59 and Gln104. Residues 104-114 (QSPDIAQGVDA) are flexible loop. ATP contacts are provided by residues 174 to 176 (DCK), 240 to 241 (KF), Asp249, 255 to 256 (RK), Ala272, and Lys276. L-methionine is bound at residue Asp249. Lys280 provides a ligand contact to L-methionine.

This sequence belongs to the AdoMet synthase family. As to quaternary structure, homotetramer; dimer of dimers. Mg(2+) is required as a cofactor. Requires K(+) as cofactor.

The protein localises to the cytoplasm. The enzyme catalyses L-methionine + ATP + H2O = S-adenosyl-L-methionine + phosphate + diphosphate. It functions in the pathway amino-acid biosynthesis; S-adenosyl-L-methionine biosynthesis; S-adenosyl-L-methionine from L-methionine: step 1/1. In terms of biological role, catalyzes the formation of S-adenosylmethionine (AdoMet) from methionine and ATP. The overall synthetic reaction is composed of two sequential steps, AdoMet formation and the subsequent tripolyphosphate hydrolysis which occurs prior to release of AdoMet from the enzyme. In Akkermansia muciniphila (strain ATCC BAA-835 / DSM 22959 / JCM 33894 / BCRC 81048 / CCUG 64013 / CIP 107961 / Muc), this protein is S-adenosylmethionine synthase.